A 199-amino-acid chain; its full sequence is Guanylate kinase (199 aa).

Residues 20 to 198 (GKLIVLTGPS…ALQAIEVALF (179 aa)) form the Guanylate kinase-like domain. 27 to 34 (GPSGVGKG) is a binding site for ATP.

Belongs to the guanylate kinase family.

It localises to the cytoplasm. The enzyme catalyses GMP + ATP = GDP + ADP. Its function is as follows. Essential for recycling GMP and indirectly, cGMP. The sequence is that of Guanylate kinase from Trichormus variabilis (strain ATCC 29413 / PCC 7937) (Anabaena variabilis).